The following is a 336-amino-acid chain: Holliday junction branch migration complex subunit RuvB (336 aa).

A large ATPase domain (RuvB-L) region spans residues 1–182 (MAKRMITTEL…FGVVHRLEFY (182 aa)). ATP is bound by residues Leu-21, Arg-22, Gly-63, Lys-66, Thr-67, Thr-68, 129 to 131 (EDY), Arg-172, Tyr-182, and Arg-219. Thr-67 serves as a coordination point for Mg(2+). The segment at 183-253 (TTEELKEIIT…VARFALDILE (71 aa)) is small ATPAse domain (RuvB-S). The interval 256–336 (KLGLDHIDRQ…GLPYENKELS (81 aa)) is head domain (RuvB-H). Residues Arg-311 and Arg-316 each coordinate DNA.

The protein belongs to the RuvB family. Homohexamer. Forms an RuvA(8)-RuvB(12)-Holliday junction (HJ) complex. HJ DNA is sandwiched between 2 RuvA tetramers; dsDNA enters through RuvA and exits via RuvB. An RuvB hexamer assembles on each DNA strand where it exits the tetramer. Each RuvB hexamer is contacted by two RuvA subunits (via domain III) on 2 adjacent RuvB subunits; this complex drives branch migration. In the full resolvosome a probable DNA-RuvA(4)-RuvB(12)-RuvC(2) complex forms which resolves the HJ.

The protein localises to the cytoplasm. The enzyme catalyses ATP + H2O = ADP + phosphate + H(+). Functionally, the RuvA-RuvB-RuvC complex processes Holliday junction (HJ) DNA during genetic recombination and DNA repair, while the RuvA-RuvB complex plays an important role in the rescue of blocked DNA replication forks via replication fork reversal (RFR). RuvA specifically binds to HJ cruciform DNA, conferring on it an open structure. The RuvB hexamer acts as an ATP-dependent pump, pulling dsDNA into and through the RuvAB complex. RuvB forms 2 homohexamers on either side of HJ DNA bound by 1 or 2 RuvA tetramers; 4 subunits per hexamer contact DNA at a time. Coordinated motions by a converter formed by DNA-disengaged RuvB subunits stimulates ATP hydrolysis and nucleotide exchange. Immobilization of the converter enables RuvB to convert the ATP-contained energy into a lever motion, pulling 2 nucleotides of DNA out of the RuvA tetramer per ATP hydrolyzed, thus driving DNA branch migration. The RuvB motors rotate together with the DNA substrate, which together with the progressing nucleotide cycle form the mechanistic basis for DNA recombination by continuous HJ branch migration. Branch migration allows RuvC to scan DNA until it finds its consensus sequence, where it cleaves and resolves cruciform DNA. This chain is Holliday junction branch migration complex subunit RuvB, found in Lachnoclostridium phytofermentans (strain ATCC 700394 / DSM 18823 / ISDg) (Clostridium phytofermentans).